The sequence spans 294 residues: ATP synthase gamma chain (294 aa).

It belongs to the ATPase gamma chain family. In terms of assembly, F-type ATPases have 2 components, CF(1) - the catalytic core - and CF(0) - the membrane proton channel. CF(1) has five subunits: alpha(3), beta(3), gamma(1), delta(1), epsilon(1). CF(0) has three main subunits: a, b and c.

Its subcellular location is the cell inner membrane. Functionally, produces ATP from ADP in the presence of a proton gradient across the membrane. The gamma chain is believed to be important in regulating ATPase activity and the flow of protons through the CF(0) complex. In Rhizobium johnstonii (strain DSM 114642 / LMG 32736 / 3841) (Rhizobium leguminosarum bv. viciae), this protein is ATP synthase gamma chain.